The sequence spans 403 residues: Putative queuine tRNA-ribosyltransferase (403 aa).

Catalysis depends on Asp-91, which acts as the Proton acceptor. Residues 91–95, Asp-177, Gln-218, and Gly-245 contribute to the substrate site; that span reads DSGGF. The segment at 275–281 is RNA binding; it reads GIGAIED. The active-site Nucleophile is the Asp-294. The RNA binding; important for wobble base 34 recognition stretch occupies residues 299 to 303; sequence ARWAR. 4 residues coordinate Zn(2+): Cys-341, Cys-343, Cys-346, and His-372.

The protein belongs to the queuine tRNA-ribosyltransferase family. As to quaternary structure, homodimer. Within each dimer, one monomer is responsible for RNA recognition and catalysis, while the other monomer binds to the replacement base PreQ1. Requires Zn(2+) as cofactor.

It catalyses the reaction 7-aminomethyl-7-carbaguanine + guanosine(34) in tRNA = 7-aminomethyl-7-carbaguanosine(34) in tRNA + guanine. Its function is as follows. Catalyzes the base-exchange of a guanine (G) residue with the queuine precursor 7-aminomethyl-7-deazaguanine (PreQ1) at position 34 (anticodon wobble position) in tRNAs with GU(N) anticodons (tRNA-Asp, -Asn, -His and -Tyr). Catalysis occurs through a double-displacement mechanism. The nucleophile active site attacks the C1' of nucleotide 34 to detach the guanine base from the RNA, forming a covalent enzyme-RNA intermediate. The proton acceptor active site deprotonates the incoming PreQ1, allowing a nucleophilic attack on the C1' of the ribose to form the product. After dissociation, two additional enzymatic reactions on the tRNA convert PreQ1 to queuine (Q), resulting in the hypermodified nucleoside queuosine (7-(((4,5-cis-dihydroxy-2-cyclopenten-1-yl)amino)methyl)-7-deazaguanosine). The polypeptide is Putative queuine tRNA-ribosyltransferase (Archaeoglobus fulgidus (strain ATCC 49558 / DSM 4304 / JCM 9628 / NBRC 100126 / VC-16)).